The sequence spans 194 residues: Methyl-CpG-binding domain protein 3-like 1 (194 aa).

Positions 1-104 (MAKSSQRKQR…KLVPSYTGGS (104 aa)) are transcription repressor.

Belongs to the MBD3L family. Highly expressed in testis. Detected at low levels in pancreas. Not detected in the other tissues tested.

The protein resides in the nucleus. In terms of biological role, transcriptional repressor. The sequence is that of Methyl-CpG-binding domain protein 3-like 1 (MBD3L1) from Homo sapiens (Human).